We begin with the raw amino-acid sequence, 406 residues long: CMP-sialic acid transporter 2 (406 aa).

At 1-41 (MKNGMAECSVCRSRLVSPSSKAISRAYDNYNYKIRVSSKQR) the chain is on the cytoplasmic side. Residues 42 to 62 (ALNVFLVVGDCMLVGLQPVLV) form a helical membrane-spanning segment. Residues 63–75 (YMSKVDGKFNFSP) lie on the Lumenal side of the membrane. The chain crosses the membrane as a helical span at residues 76–96 (ISVNFLTEIAKVIFAMVMLLF). Residues 97 to 148 (QARHQKVGEKPLLSLSTFVQAARNNMLLAVPAGLYAINNYLKFTMQLYFNPA) lie on the Cytoplasmic side of the membrane. A helical transmembrane segment spans residues 149–169 (TVKMLSNLKVLVIAVLLKMIM). Residues 170 to 172 (KRR) are Lumenal-facing. Residues 173 to 193 (FSIIQWEALALLLIGISINQL) traverse the membrane as a helical segment. Residues 194-201 (RSLPEGAT) lie on the Cytoplasmic side of the membrane. Residues 202–222 (TVAVPIATGAYICTFIFVTVP) traverse the membrane as a helical segment. Over 223-245 (SLASVYNEYALKSQYDTSIYLQN) the chain is Lumenal. A helical membrane pass occupies residues 246–266 (LFLYGYGAIFNFLGILGTVIY). Over 267–282 (KGPGSFDILQGHSRAT) the chain is Cytoplasmic. The chain crosses the membrane as a helical span at residues 283–303 (MFLILNNAAQGILSSFFFKYA). Residues 304–323 (DTILKKYSSTVATIFTGIAS) are Lumenal-facing. The helical transmembrane segment at 324-344 (AALFGHILTMNFLLGISIVFI) threads the bilayer. Residues 345–406 (SMHQFFSPLS…SDDRVPLLPR (62 aa)) are Cytoplasmic-facing.

Belongs to the nucleotide-sugar transporter family. CMP-Sialate:CMP antiporter (TC 2.A.7.12) subfamily.

It is found in the golgi apparatus membrane. Functionally, sugar transporter involved in the transport of CMP-sialic acid from the cytoplasm into the Golgi. This chain is CMP-sialic acid transporter 2, found in Arabidopsis thaliana (Mouse-ear cress).